The sequence spans 186 residues: MNVTSLSFPYGESIQWFCADRTDKLPPSPLKEWLLAPGSLTKKLKTCCNQFEVKVLGEGQLAPFKDEYPQQGSVWVREVLLCLDNVPWVFARTLIPLSLLSEREADFLGLGSRPLGELLFSQDNFIPGRIEVASFDTGSRLAHLAASLDQRVEHLLWGRRRYFHHGQDEMIVSEIFLPAAERAICQ.

Arginine 77, leucine 115, and glutamate 174 together coordinate substrate.

It belongs to the UbiC family.

It localises to the cytoplasm. The catalysed reaction is chorismate = 4-hydroxybenzoate + pyruvate. It functions in the pathway cofactor biosynthesis; ubiquinone biosynthesis. Removes the pyruvyl group from chorismate, with concomitant aromatization of the ring, to provide 4-hydroxybenzoate (4HB) for the ubiquinone pathway. In Shewanella sp. (strain W3-18-1), this protein is Probable chorismate pyruvate-lyase.